The sequence spans 278 residues: Orotidine 5'-phosphate decarboxylase (278 aa).

Lys-96 serves as the catalytic Proton donor.

This sequence belongs to the OMP decarboxylase family. Type 2 subfamily.

It catalyses the reaction orotidine 5'-phosphate + H(+) = UMP + CO2. It functions in the pathway pyrimidine metabolism; UMP biosynthesis via de novo pathway; UMP from orotate: step 2/2. The polypeptide is Orotidine 5'-phosphate decarboxylase (Salinispora tropica (strain ATCC BAA-916 / DSM 44818 / JCM 13857 / NBRC 105044 / CNB-440)).